The following is a 901-amino-acid chain: Probable inorganic carbon transporter subunit DabA (901 aa).

Positions 424, 426, 606, and 621 each coordinate Zn(2+).

This sequence belongs to the inorganic carbon transporter (TC 9.A.2) DabA family. As to quaternary structure, forms a complex with DabB. Requires Zn(2+) as cofactor.

It localises to the cell membrane. Part of an energy-coupled inorganic carbon pump. The protein is Probable inorganic carbon transporter subunit DabA of Staphylococcus aureus (strain MSSA476).